The sequence spans 348 residues: L-threonine 3-dehydrogenase (348 aa).

Position 38 (Cys-38) interacts with Zn(2+). Active-site charge relay system residues include Thr-40 and His-43. Zn(2+)-binding residues include His-63, Glu-64, Cys-93, Cys-96, Cys-99, and Cys-107. NAD(+)-binding positions include Ile-175, Asp-195, Arg-200, 263 to 265 (LGI), and 287 to 288 (IY).

It belongs to the zinc-containing alcohol dehydrogenase family. As to quaternary structure, homotetramer. It depends on Zn(2+) as a cofactor.

It localises to the cytoplasm. The catalysed reaction is L-threonine + NAD(+) = (2S)-2-amino-3-oxobutanoate + NADH + H(+). It participates in amino-acid degradation; L-threonine degradation via oxydo-reductase pathway; glycine from L-threonine: step 1/2. Catalyzes the NAD(+)-dependent oxidation of L-threonine to 2-amino-3-ketobutyrate. The polypeptide is L-threonine 3-dehydrogenase (Deinococcus radiodurans (strain ATCC 13939 / DSM 20539 / JCM 16871 / CCUG 27074 / LMG 4051 / NBRC 15346 / NCIMB 9279 / VKM B-1422 / R1)).